The primary structure comprises 602 residues: Sodium-independent sulfate anion transporter (602 aa).

At 1-47 the chain is on the extracellular side; it reads MSPPMSPMKPPKGFAPMSCCWSTETMQKWLPFLGWLPDYTWYALKMD. A helical transmembrane segment spans residues 48 to 68; that stretch reads FIAGISVGLTVIPQALAYAEV. Alanine 69 is a topological domain (cytoplasmic). Residues 70 to 90 traverse the membrane as a helical segment; the sequence is GLPPQYGLYSAFMGCFVYFFL. At 91 to 115 the chain is on the extracellular side; it reads GTSRDVTLGPTAIMSLLVSFYTFHE. A helical transmembrane segment spans residues 116-136; sequence PAYAVLLAFLTGCIQLGMGFL. The Cytoplasmic segment spans residues 137–143; the sequence is RLGLLLD. Residues 144–164 form a helical membrane-spanning segment; it reads FISCPVIKGFTSAAAIIIGFG. At 165–193 the chain is on the extracellular side; that stretch reads QIKNLLGLQHIPRQFFLQVYYTFHNIGET. Residues 194 to 214 traverse the membrane as a helical segment; sequence RVGDAVLGLVCMVLLLVLKLM. Residues 215 to 246 are Cytoplasmic-facing; that stretch reads RDHVPPVHPEMPTGVRLSHGLVWTATTARNAL. A helical membrane pass occupies residues 247–267; sequence VVSFAALVAYSFQVTGYQPFV. Residues 268-300 lie on the Extracellular side of the membrane; it reads LTGKTPEGLPDAHIPPFSVTTANGTISFTEMVQ. A helical transmembrane segment spans residues 301 to 321; it reads GMGAGLVVVPLMGLLESIAVA. At 322–337 the chain is on the cytoplasmic side; that stretch reads KSFASQNNYRINSNQE. A helical transmembrane segment spans residues 338 to 358; it reads LLALGFTNILGSLFSSYPVTG. Residues 359–370 are Extracellular-facing; sequence SFGRTAVNAQSG. A helical membrane pass occupies residues 371–391; that stretch reads VCTPAGGLMTGALVLLSLDYL. The Cytoplasmic segment spans residues 392 to 394; that stretch reads TSL. Residues 395–415 traverse the membrane as a helical segment; sequence FYYIPKSALAAVIIMAVVPLF. Over 416–438 the chain is Extracellular; the sequence is DTKIVKTLWRVKRLDLLPLCVTF. A helical membrane pass occupies residues 439–459; the sequence is LLCFWEVQYGILAGTLVSVLI. Residues 460–602 lie on the Cytoplasmic side of the membrane; that stretch reads LLHSVARPKI…PEHKIALLKA (143 aa). Positions 466-580 constitute an STAS domain; that stretch reads RPKIQVSEGP…EAEKYLKQEP (115 aa).

This sequence belongs to the SLC26A/SulP transporter (TC 2.A.53) family.

It localises to the cell membrane. Its subcellular location is the lysosome membrane. The protein resides in the apical cell membrane. It is found in the basolateral cell membrane. The enzyme catalyses hydrogencarbonate(in) + chloride(out) = hydrogencarbonate(out) + chloride(in). It carries out the reaction sulfate(in) + H(+)(in) = sulfate(out) + H(+)(out). It catalyses the reaction oxalate(in) + chloride(out) = oxalate(out) + chloride(in). Functionally, sodium-independent anion exchanger mediating bicarbonate, chloride, sulfate and oxalate transport. Exhibits sodium-independent sulfate anion transporter activity that may cooperate with SLC26A2 to mediate DIDS-sensitive sulfate uptake into high endothelial venules endothelial cells (HEVEC). In the kidney, mediates chloride-bicarbonate exchange, facilitating V-ATPase-mediated acid secretion. May function as a chloride channel, playing an important role in moderating chloride homeostasis and neuronal activity in the cerebellum. In Bos taurus (Bovine), this protein is Sodium-independent sulfate anion transporter.